Reading from the N-terminus, the 554-residue chain is Probable efflux pump gsfJ (554 aa).

14 consecutive transmembrane segments (helical) span residues 54 to 74, 93 to 115, 120 to 140, 152 to 172, 181 to 201, 206 to 226, 248 to 268, 279 to 299, 321 to 341, 349 to 369, 379 to 399, 410 to 430, 447 to 467, and 518 to 538; these read LAAVVFSLMLGMFLVALDNTI, SWYGSAYLMTFGCGFQSTWGKFY, IKVWFLVAVFIFEVGSLICAV, AIAGFGGSGVGVGIFTIIGFA, LLGFTGATYGIAAVLGPLIGG, KCFYINLPIGGVAAGTIFLLF, LVGATLMMGLIVSYILALQYG, VIGLLVGFFLFVLAFVTWEIY, IYMFFFSGAYFIILYYLPIYF, PIGSGVKMLALIIPLTLAAIV, IVPLFWIIGGALGTVGCGLFY, WVGYQIIVGFSTGWTFQIAMS, IVNFFMTVGGAFFISAAQCAF, and VFAITIAAFGVATVIGFFGSW.

It belongs to the major facilitator superfamily.

It localises to the membrane. Its function is as follows. Probable efflux pump; part of the gene cluster that mediates the biosynthesis of griseofulvin. This chain is Probable efflux pump gsfJ, found in Penicillium aethiopicum.